The chain runs to 283 residues: MSIGVFDSGVGGLTVHRALVNRLPQADFIYLADQANAPYGGRPGEEIVALTRAGCERLFDAGASLVVLACNTASAIALRRLQQTWLPGYRKALGRPINVLGIIVPTIEAATGLPWEHEAERRGEKVEQLDILGVFSTPGTAASRVYEIEIDKRRQDVAVFSEPCPNLARMIEAGAGAVELATEVERHVQQLKTRIGRYPDRAILGCTHYEIIADLFRAALPAGTPLIHQPASTADALELYFQRHPELDPGTGGGRVFLTTGTPGPQNALVETFWGGPLRFEAA.

Substrate is bound by residues Asp-7–Ser-8 and Tyr-39–Gly-40. Catalysis depends on Cys-70, which acts as the Proton donor/acceptor. Residue Asn-71–Thr-72 coordinates substrate. Cys-206 (proton donor/acceptor) is an active-site residue. Thr-207 to His-208 serves as a coordination point for substrate.

The protein belongs to the aspartate/glutamate racemases family.

The enzyme catalyses L-glutamate = D-glutamate. The protein operates within cell wall biogenesis; peptidoglycan biosynthesis. Provides the (R)-glutamate required for cell wall biosynthesis. The chain is Glutamate racemase from Caulobacter sp. (strain K31).